Reading from the N-terminus, the 84-residue chain is Alpha-mammal toxin Ts2 (84 aa).

Positions 1 to 20 are cleaved as a signal peptide; the sequence is MKGFLLFISILMMIGTIVVG. One can recognise an LCN-type CS-alpha/beta domain in the interval 21–83; that stretch reads KEGYAMDHEG…VWDYATNKCG (63 aa). 4 disulfide bridges follow: C31–C82, C35–C58, C43–C63, and C47–C65. Residue C82 is modified to Cysteine amide.

This sequence belongs to the long (4 C-C) scorpion toxin superfamily. Sodium channel inhibitor family. Beta subfamily. In terms of tissue distribution, expressed by the venom gland.

The protein resides in the secreted. Its function is as follows. Alpha toxins bind voltage-independently at site-3 of sodium channels (Nav) and inhibit the inactivation of the activated channels, thereby blocking neuronal transmission. This toxin acts on Nav1.2/SCN2A, Nav1.3/SCN3A, Nav1.5/SCN5A, Nav1.6/SCN8A and Nav1.7/SCN9A voltage-gated sodium channels, with the highest affinity for Nav1.3/SCN3A, followed by Nav1.6/SCN8A and Nav1.7/SCN9A which are affected almost equally. Interestingly, shows a significant shift of the voltage dependence of activation for Nav1.3/SCN3A that is characteristic of beta-toxins. In addition, in presence of LPS, this toxin inhibits the release of NO, IL-6 and TNF-alpha in J774.1 cells. Further, in the absence of LPS, it stimulates the production of the anti-inflammatory cytokine IL-10. This toxin is active on mammals. The protein is Alpha-mammal toxin Ts2 of Tityus serrulatus (Brazilian scorpion).